We begin with the raw amino-acid sequence, 292 residues long: Large ribosomal subunit protein bL19m (292 aa).

A disordered region spans residues Pro40–Val61. Ser77 is modified (phosphoserine).

The protein belongs to the bacterial ribosomal protein bL19 family. In terms of assembly, component of the mitochondrial ribosome large subunit (39S) which comprises a 16S rRNA and about 50 distinct proteins.

The protein resides in the mitochondrion. In Pongo abelii (Sumatran orangutan), this protein is Large ribosomal subunit protein bL19m (MRPL19).